We begin with the raw amino-acid sequence, 104 residues long: Membrane magnesium transporter (104 aa).

Over 1–2 (MN) the chain is Cytoplasmic. Residues 3–23 (LGFLVGVFGVLILSHAAYSTI) traverse the membrane as a helical segment. Residues 24–40 (QYRGLLKIMEEEFSRPP) lie on the Lumenal side of the membrane. Residues 41–61 (INVILELIIGLALCMWAALTF) form a helical membrane-spanning segment. Over 62-104 (PGKFLSIHPDSDENRAVFLPDNSDFMIFNHRGRLFPPQIDMKF) the chain is Cytoplasmic.

It belongs to the membrane magnesium transporter (TC 1.A.67) family. In terms of assembly, component of the ER membrane protein complex (EMC).

It is found in the endoplasmic reticulum membrane. It localises to the golgi apparatus membrane. Its subcellular location is the early endosome membrane. Mediates Mg(2+) transport. The sequence is that of Membrane magnesium transporter from Arabidopsis thaliana (Mouse-ear cress).